We begin with the raw amino-acid sequence, 522 residues long: Protein nucleotidyltransferase YdiU (522 aa).

8 residues coordinate ATP: Gly-101, Gly-103, Arg-104, Lys-123, Asp-135, Gly-136, Arg-193, and Arg-200. Asp-270 (proton acceptor) is an active-site residue. The Mg(2+) site is built by Asn-271 and Asp-280. Asp-280 contributes to the ATP binding site.

The protein belongs to the SELO family. It depends on Mg(2+) as a cofactor. Mn(2+) serves as cofactor.

The catalysed reaction is L-seryl-[protein] + ATP = 3-O-(5'-adenylyl)-L-seryl-[protein] + diphosphate. It carries out the reaction L-threonyl-[protein] + ATP = 3-O-(5'-adenylyl)-L-threonyl-[protein] + diphosphate. The enzyme catalyses L-tyrosyl-[protein] + ATP = O-(5'-adenylyl)-L-tyrosyl-[protein] + diphosphate. It catalyses the reaction L-histidyl-[protein] + UTP = N(tele)-(5'-uridylyl)-L-histidyl-[protein] + diphosphate. The catalysed reaction is L-seryl-[protein] + UTP = O-(5'-uridylyl)-L-seryl-[protein] + diphosphate. It carries out the reaction L-tyrosyl-[protein] + UTP = O-(5'-uridylyl)-L-tyrosyl-[protein] + diphosphate. In terms of biological role, nucleotidyltransferase involved in the post-translational modification of proteins. It can catalyze the addition of adenosine monophosphate (AMP) or uridine monophosphate (UMP) to a protein, resulting in modifications known as AMPylation and UMPylation. The chain is Protein nucleotidyltransferase YdiU from Flavobacterium johnsoniae (strain ATCC 17061 / DSM 2064 / JCM 8514 / BCRC 14874 / CCUG 350202 / NBRC 14942 / NCIMB 11054 / UW101) (Cytophaga johnsonae).